A 336-amino-acid chain; its full sequence is Phospho-N-acetylmuramoyl-pentapeptide-transferase (336 aa).

10 helical membrane passes run 3-23, 53-73, 78-98, 118-138, 143-163, 174-194, 200-220, 226-246, 254-274, and 316-336; these read LTLIAAIISFMVSAFTMPYFI, GGTVFLLVATAVSLLVSLFSI, SLALISGILSIVVIYGIIGFL, LALQLAGGLMFYFLHVSPSGI, VFGYQLSLGIFYLFFVLFWVV, GIDGLASISVVISLVTYGVIA, FDVLLLIGTMIGALLGFFCFN, VFMGDVGSLALGAMLAAISIA, LIIGIVYVLETSSVMLQVFYF, and AFLWGVGSLASLLVLAILYVF.

The protein belongs to the glycosyltransferase 4 family. MraY subfamily. It depends on Mg(2+) as a cofactor.

It is found in the cell membrane. It carries out the reaction UDP-N-acetyl-alpha-D-muramoyl-L-alanyl-gamma-D-glutamyl-L-lysyl-D-alanyl-D-alanine + di-trans,octa-cis-undecaprenyl phosphate = Mur2Ac(oyl-L-Ala-gamma-D-Glu-L-Lys-D-Ala-D-Ala)-di-trans,octa-cis-undecaprenyl diphosphate + UMP. Its pathway is cell wall biogenesis; peptidoglycan biosynthesis. Its function is as follows. Catalyzes the initial step of the lipid cycle reactions in the biosynthesis of the cell wall peptidoglycan: transfers peptidoglycan precursor phospho-MurNAc-pentapeptide from UDP-MurNAc-pentapeptide onto the lipid carrier undecaprenyl phosphate, yielding undecaprenyl-pyrophosphoryl-MurNAc-pentapeptide, known as lipid I. The sequence is that of Phospho-N-acetylmuramoyl-pentapeptide-transferase from Streptococcus pyogenes serotype M18 (strain MGAS8232).